Here is a 126-residue protein sequence, read N- to C-terminus: Plastocyanin (126 aa).

The signal sequence occupies residues 1 to 28 (MSKKFLTILAGLLLVVSSFFLSVSPAAA). A Plastocyanin-like domain is found at 29-126 (ANATVKMGSD…AGMVGKVVVE (98 aa)). The Cu cation site is built by H67, C111, H114, and M119.

The protein belongs to the plastocyanin family. Requires Cu(2+) as cofactor.

The protein resides in the cellular thylakoid membrane. Its function is as follows. Participates in electron transfer between P700 and the cytochrome b6-f complex in photosystem I. In Synechocystis sp. (strain ATCC 27184 / PCC 6803 / Kazusa), this protein is Plastocyanin (petE).